A 288-amino-acid chain; its full sequence is MSQISAKDVKDLRDTTGVGMMDCKKALEETGGDMQKAVEYLRKKGAALAAKRAEKDASEGMICIKVAEDRKAGVILELNCETDFVARGEVFTGFAGALGQLALEGSAASAGALLGMTLSAEFGGEKVEDAIKTMTGKLGEKIELKRLVFCDAADGLVEAYVHPGAQLGAIIHIASAQPDSARELARDLAMQVAAAAPIVVDRSAVPEELIAKESDIYRQQALGQGKKEEFVDRIVQGRIEKYYQEVVLTEQAFIKVNNMKVSDVLGEFRKQHEAAVEIREFVRYQLGE.

Residues 82-85 (TDFV) are involved in Mg(2+) ion dislocation from EF-Tu.

The protein belongs to the EF-Ts family.

Its subcellular location is the cytoplasm. Its function is as follows. Associates with the EF-Tu.GDP complex and induces the exchange of GDP to GTP. It remains bound to the aminoacyl-tRNA.EF-Tu.GTP complex up to the GTP hydrolysis stage on the ribosome. This is Elongation factor Ts from Chlorobium phaeovibrioides (strain DSM 265 / 1930) (Prosthecochloris vibrioformis (strain DSM 265)).